The chain runs to 196 residues: Large ribosomal subunit protein uL18 (196 aa).

Belongs to the universal ribosomal protein uL18 family. In terms of assembly, part of the 50S ribosomal subunit. Contacts the 5S and 23S rRNAs.

In terms of biological role, this is one of the proteins that bind and probably mediate the attachment of the 5S RNA into the large ribosomal subunit, where it forms part of the central protuberance. The sequence is that of Large ribosomal subunit protein uL18 from Saccharolobus islandicus (strain L.S.2.15 / Lassen #1) (Sulfolobus islandicus).